The sequence spans 874 residues: Alanine--tRNA ligase (874 aa).

The Zn(2+) site is built by H563, H567, C665, and H669.

The protein belongs to the class-II aminoacyl-tRNA synthetase family. Zn(2+) serves as cofactor.

It localises to the cytoplasm. It catalyses the reaction tRNA(Ala) + L-alanine + ATP = L-alanyl-tRNA(Ala) + AMP + diphosphate. Functionally, catalyzes the attachment of alanine to tRNA(Ala) in a two-step reaction: alanine is first activated by ATP to form Ala-AMP and then transferred to the acceptor end of tRNA(Ala). Also edits incorrectly charged Ser-tRNA(Ala) and Gly-tRNA(Ala) via its editing domain. This is Alanine--tRNA ligase from Haemophilus influenzae (strain 86-028NP).